Here is a 177-residue protein sequence, read N- to C-terminus: Large ribosomal subunit protein uL6 (177 aa).

Belongs to the universal ribosomal protein uL6 family. In terms of assembly, part of the 50S ribosomal subunit.

Functionally, this protein binds to the 23S rRNA, and is important in its secondary structure. It is located near the subunit interface in the base of the L7/L12 stalk, and near the tRNA binding site of the peptidyltransferase center. The chain is Large ribosomal subunit protein uL6 from Variovorax paradoxus (strain S110).